A 661-amino-acid polypeptide reads, in one-letter code: Fusaric acid cluster transcription factor FUB12 (661 aa).

The zn(2)-C6 fungal-type DNA-binding region spans 17-48 (CVPCRTRKIKCNAAVVGLPCGSCVSRECPDDC). Disordered stretches follow at residues 57 to 131 (TVKV…RPPG) and 151 to 184 (SAAQ…PQLD). Positions 73 to 98 (PDTNGSVLSPRQQQLPTNVSRQTTDS) are enriched in polar residues. A compositionally biased stretch (basic and acidic residues) spans 99 to 109 (SHSDPVEESIH). Over residues 110 to 119 (ASHTGSSLRN) the composition is skewed to polar residues. The span at 120-129 (DTPHSRDRRP) shows a compositional bias: basic and acidic residues.

Its subcellular location is the nucleus. Efflux pump involved in export of biosynthesis of fusaric acid, a mycotoxin with low to moderate toxicity to animals and humans, but with high phytotoxic properties. Constitutes a self-protecting mechanism of the fungus against critical levels of FSA within the cell. The protein is Fusaric acid cluster transcription factor FUB12 of Fusarium oxysporum f. sp. lycopersici (strain 4287 / CBS 123668 / FGSC 9935 / NRRL 34936) (Fusarium vascular wilt of tomato).